Reading from the N-terminus, the 277-residue chain is 4-hydroxy-3-methylbut-2-enyl diphosphate reductase (277 aa).

Position 12 (C12) interacts with [4Fe-4S] cluster. H36 and H70 together coordinate (2E)-4-hydroxy-3-methylbut-2-enyl diphosphate. 2 residues coordinate dimethylallyl diphosphate: H36 and H70. 2 residues coordinate isopentenyl diphosphate: H36 and H70. C92 contacts [4Fe-4S] cluster. H120 provides a ligand contact to (2E)-4-hydroxy-3-methylbut-2-enyl diphosphate. H120 is a binding site for dimethylallyl diphosphate. Residue H120 participates in isopentenyl diphosphate binding. E122 serves as the catalytic Proton donor. T158 serves as a coordination point for (2E)-4-hydroxy-3-methylbut-2-enyl diphosphate. A [4Fe-4S] cluster-binding site is contributed by C186. Residues S214, N216, and S258 each contribute to the (2E)-4-hydroxy-3-methylbut-2-enyl diphosphate site. Residues S214, N216, and S258 each contribute to the dimethylallyl diphosphate site. The isopentenyl diphosphate site is built by S214, N216, and S258.

It belongs to the IspH family. [4Fe-4S] cluster is required as a cofactor.

It carries out the reaction isopentenyl diphosphate + 2 oxidized [2Fe-2S]-[ferredoxin] + H2O = (2E)-4-hydroxy-3-methylbut-2-enyl diphosphate + 2 reduced [2Fe-2S]-[ferredoxin] + 2 H(+). The catalysed reaction is dimethylallyl diphosphate + 2 oxidized [2Fe-2S]-[ferredoxin] + H2O = (2E)-4-hydroxy-3-methylbut-2-enyl diphosphate + 2 reduced [2Fe-2S]-[ferredoxin] + 2 H(+). Its pathway is isoprenoid biosynthesis; dimethylallyl diphosphate biosynthesis; dimethylallyl diphosphate from (2E)-4-hydroxy-3-methylbutenyl diphosphate: step 1/1. The protein operates within isoprenoid biosynthesis; isopentenyl diphosphate biosynthesis via DXP pathway; isopentenyl diphosphate from 1-deoxy-D-xylulose 5-phosphate: step 6/6. Its function is as follows. Catalyzes the conversion of 1-hydroxy-2-methyl-2-(E)-butenyl 4-diphosphate (HMBPP) into a mixture of isopentenyl diphosphate (IPP) and dimethylallyl diphosphate (DMAPP). Acts in the terminal step of the DOXP/MEP pathway for isoprenoid precursor biosynthesis. This chain is 4-hydroxy-3-methylbut-2-enyl diphosphate reductase, found in Campylobacter jejuni subsp. doylei (strain ATCC BAA-1458 / RM4099 / 269.97).